Consider the following 238-residue polypeptide: Probable transcriptional regulatory protein SSP2054 (238 aa).

This sequence belongs to the TACO1 family. YeeN subfamily.

The protein localises to the cytoplasm. This is Probable transcriptional regulatory protein SSP2054 from Staphylococcus saprophyticus subsp. saprophyticus (strain ATCC 15305 / DSM 20229 / NCIMB 8711 / NCTC 7292 / S-41).